The chain runs to 116 residues: Iron-sulfur cluster insertion protein ErpA (116 aa).

Iron-sulfur cluster is bound by residues C44, C108, and C110.

It belongs to the HesB/IscA family. As to quaternary structure, homodimer. Iron-sulfur cluster is required as a cofactor.

In terms of biological role, required for insertion of 4Fe-4S clusters for at least IspG. This is Iron-sulfur cluster insertion protein ErpA from Aeromonas hydrophila subsp. hydrophila (strain ATCC 7966 / DSM 30187 / BCRC 13018 / CCUG 14551 / JCM 1027 / KCTC 2358 / NCIMB 9240 / NCTC 8049).